Consider the following 122-residue polypeptide: Large ribosomal subunit protein uL24 (122 aa).

It belongs to the universal ribosomal protein uL24 family. As to quaternary structure, part of the 50S ribosomal subunit.

One of two assembly initiator proteins, it binds directly to the 5'-end of the 23S rRNA, where it nucleates assembly of the 50S subunit. Functionally, located at the polypeptide exit tunnel on the outside of the subunit. This Pyrobaculum arsenaticum (strain DSM 13514 / JCM 11321 / PZ6) protein is Large ribosomal subunit protein uL24.